The following is a 359-amino-acid chain: 5-amino-6-(D-ribitylamino)uracil--L-tyrosine 4-hydroxyphenyl transferase (359 aa).

The Radical SAM core domain occupies 45 to 282 (VTYVVNANIN…VYAISRIFFK (238 aa)). [4Fe-4S] cluster-binding residues include cysteine 59, cysteine 63, and cysteine 66.

The protein belongs to the radical SAM superfamily. CofH family. Consists of two subunits, CofG and CofH. [4Fe-4S] cluster serves as cofactor.

The catalysed reaction is 5-amino-6-(D-ribitylamino)uracil + L-tyrosine + S-adenosyl-L-methionine = 5-amino-5-(4-hydroxybenzyl)-6-(D-ribitylimino)-5,6-dihydrouracil + 2-iminoacetate + 5'-deoxyadenosine + L-methionine + H(+). It functions in the pathway cofactor biosynthesis; coenzyme F0 biosynthesis. Its function is as follows. Catalyzes the radical-mediated synthesis of 5-amino-5-(4-hydroxybenzyl)-6-(D-ribitylimino)-5,6-dihydrouracil from 5-amino-6-(D-ribitylamino)uracil and L-tyrosine. This Methanococcus maripaludis (strain C7 / ATCC BAA-1331) protein is 5-amino-6-(D-ribitylamino)uracil--L-tyrosine 4-hydroxyphenyl transferase.